A 98-amino-acid polypeptide reads, in one-letter code: ATP synthase subunit c (98 aa).

Transmembrane regions (helical) follow at residues 27–47 and 73–93; these read ALALSAPFAVGLAALGSGLGL and IIGAALIEALTIYALIVFFVV.

It belongs to the ATPase C chain family. In terms of assembly, F-type ATPases have 2 components, F(1) - the catalytic core - and F(0) - the membrane proton channel. F(1) has five subunits: alpha(3), beta(3), gamma(1), delta(1), epsilon(1). F(0) has three main subunits: a(1), b(2) and c(10-14). The alpha and beta chains form an alternating ring which encloses part of the gamma chain. F(1) is attached to F(0) by a central stalk formed by the gamma and epsilon chains, while a peripheral stalk is formed by the delta and b chains.

The protein localises to the cell inner membrane. Functionally, f(1)F(0) ATP synthase produces ATP from ADP in the presence of a proton or sodium gradient. F-type ATPases consist of two structural domains, F(1) containing the extramembraneous catalytic core and F(0) containing the membrane proton channel, linked together by a central stalk and a peripheral stalk. During catalysis, ATP synthesis in the catalytic domain of F(1) is coupled via a rotary mechanism of the central stalk subunits to proton translocation. Key component of the F(0) channel; it plays a direct role in translocation across the membrane. A homomeric c-ring of between 10-14 subunits forms the central stalk rotor element with the F(1) delta and epsilon subunits. The polypeptide is ATP synthase subunit c (Protochlamydia amoebophila (strain UWE25)).